Consider the following 293-residue polypeptide: Protease HtpX (293 aa).

Transmembrane regions (helical) follow at residues 4–24 (IALFLLTNLAVMVVFGLVLSL) and 34–54 (GLLIMALLFGFGGSFISLLMS). His-139 provides a ligand contact to Zn(2+). Glu-140 is an active-site residue. His-143 provides a ligand contact to Zn(2+). Transmembrane regions (helical) follow at residues 158 to 178 (VVNTFVIFISRILAQIAAGFM) and 193 to 213 (LIYFAVAMVLELVFGILASII). Residue Glu-222 participates in Zn(2+) binding.

It belongs to the peptidase M48B family. Requires Zn(2+) as cofactor.

Its subcellular location is the cell inner membrane. In Enterobacter sp. (strain 638), this protein is Protease HtpX.